Consider the following 391-residue polypeptide: Succinate--CoA ligase [ADP-forming] subunit beta (391 aa).

One can recognise an ATP-grasp domain in the interval 9–245 (KQIFAKYGVP…ISEEDADERE (237 aa)). ATP is bound by residues K46, 53-55 (GRG), E99, A102, and E107. Mg(2+) is bound by residues N200 and D214. Substrate contacts are provided by residues N265 and 322–324 (GIV).

The protein belongs to the succinate/malate CoA ligase beta subunit family. As to quaternary structure, heterotetramer of two alpha and two beta subunits. Mg(2+) is required as a cofactor.

The catalysed reaction is succinate + ATP + CoA = succinyl-CoA + ADP + phosphate. It catalyses the reaction GTP + succinate + CoA = succinyl-CoA + GDP + phosphate. It participates in carbohydrate metabolism; tricarboxylic acid cycle; succinate from succinyl-CoA (ligase route): step 1/1. Functionally, succinyl-CoA synthetase functions in the citric acid cycle (TCA), coupling the hydrolysis of succinyl-CoA to the synthesis of either ATP or GTP and thus represents the only step of substrate-level phosphorylation in the TCA. The beta subunit provides nucleotide specificity of the enzyme and binds the substrate succinate, while the binding sites for coenzyme A and phosphate are found in the alpha subunit. This Sulfurimonas denitrificans (strain ATCC 33889 / DSM 1251) (Thiomicrospira denitrificans (strain ATCC 33889 / DSM 1251)) protein is Succinate--CoA ligase [ADP-forming] subunit beta.